A 257-amino-acid chain; its full sequence is uncharacterized protein (257 aa).

Residues Asp34, Asp60, Val61, Asn87, Tyr152, and Lys156 each coordinate NAD(+). Catalysis depends on Tyr152, which acts as the Proton acceptor.

It belongs to the short-chain dehydrogenases/reductases (SDR) family.

This is an uncharacterized protein from Bacillus subtilis (strain 168).